The chain runs to 1207 residues: DNA-directed RNA polymerase subunit beta' (1207 aa).

Zn(2+)-binding residues include Cys-60, Cys-62, Cys-75, and Cys-78. Residues Asp-450, Asp-452, and Asp-454 each contribute to the Mg(2+) site. Zn(2+)-binding residues include Cys-819, Cys-893, Cys-900, and Cys-903.

It belongs to the RNA polymerase beta' chain family. The RNAP catalytic core consists of 2 alpha, 1 beta, 1 beta' and 1 omega subunit. When a sigma factor is associated with the core the holoenzyme is formed, which can initiate transcription. Mg(2+) is required as a cofactor. It depends on Zn(2+) as a cofactor.

It catalyses the reaction RNA(n) + a ribonucleoside 5'-triphosphate = RNA(n+1) + diphosphate. Functionally, DNA-dependent RNA polymerase catalyzes the transcription of DNA into RNA using the four ribonucleoside triphosphates as substrates. The protein is DNA-directed RNA polymerase subunit beta' of Streptococcus pyogenes serotype M12 (strain MGAS2096).